The chain runs to 768 residues: Translation initiation factor IF-2, chloroplastic (768 aa).

Disordered stretches follow at residues 1 to 20 (MFLN…SNIN), 54 to 77 (KSES…DKKS), and 155 to 176 (KKVA…PPES). Residues 54-65 (KSESHTGGEQHL) show a composition bias toward basic and acidic residues. Over residues 160 to 176 (TPSQNSASIQSNSPPES) the composition is skewed to polar residues. The tr-type G domain occupies 261–434 (KRPPIVTVMG…TLLAELEDLK (174 aa)). GTP is bound by residues 270–277 (GHVDHGKT), 320–324 (DTPGH), and 374–377 (SKID).

This sequence belongs to the TRAFAC class translation factor GTPase superfamily. Classic translation factor GTPase family. IF-2 subfamily.

It localises to the plastid. The protein localises to the chloroplast. Its function is as follows. One of the essential components for the initiation of protein synthesis. Protects formylmethionyl-tRNA from spontaneous hydrolysis and promotes its binding to the 30S ribosomal subunits. Also involved in the hydrolysis of GTP during the formation of the 70S ribosomal complex. The polypeptide is Translation initiation factor IF-2, chloroplastic (infB) (Pyropia yezoensis (Susabi-nori)).